The primary structure comprises 447 residues: Na(+)-translocating NADH-quinone reductase subunit A (447 aa).

It belongs to the NqrA family. In terms of assembly, composed of six subunits; NqrA, NqrB, NqrC, NqrD, NqrE and NqrF.

The catalysed reaction is a ubiquinone + n Na(+)(in) + NADH + H(+) = a ubiquinol + n Na(+)(out) + NAD(+). Functionally, NQR complex catalyzes the reduction of ubiquinone-1 to ubiquinol by two successive reactions, coupled with the transport of Na(+) ions from the cytoplasm to the periplasm. NqrA to NqrE are probably involved in the second step, the conversion of ubisemiquinone to ubiquinol. The polypeptide is Na(+)-translocating NADH-quinone reductase subunit A (Saccharophagus degradans (strain 2-40 / ATCC 43961 / DSM 17024)).